The chain runs to 309 residues: Homoserine O-succinyltransferase (309 aa).

The Acyl-thioester intermediate role is filled by cysteine 142. Lysine 163 and serine 192 together coordinate substrate. Histidine 235 (proton acceptor) is an active-site residue. Glutamate 237 is an active-site residue. Residue arginine 249 participates in substrate binding.

Belongs to the MetA family.

The protein localises to the cytoplasm. The catalysed reaction is L-homoserine + succinyl-CoA = O-succinyl-L-homoserine + CoA. The protein operates within amino-acid biosynthesis; L-methionine biosynthesis via de novo pathway; O-succinyl-L-homoserine from L-homoserine: step 1/1. In terms of biological role, transfers a succinyl group from succinyl-CoA to L-homoserine, forming succinyl-L-homoserine. The protein is Homoserine O-succinyltransferase of Proteus mirabilis (strain HI4320).